The primary structure comprises 1756 residues: Multifunctional conjugation protein TraI (1756 aa).

The tract at residues 1-330 (MLSFSVVKSA…TQAIAGLSER (330 aa)) is DNA relaxase. Tyr16 acts as the O-(5'-phospho-DNA)-tyrosine intermediate; for relaxase activity in catalysis. The active-site Relaxase is Tyr17. The Mg(2+) site is built by His146, His157, and His159. The tract at residues 950 to 1500 (GKEAVTPLME…LRDVAAGRAV (551 aa)) is DNA helicase I. 992-999 (GYAGVGKT) lines the ATP pocket. A coiled-coil region spans residues 1719 to 1753 (EQEAVREVARENLLQERLQQIERDMVRDLQKEKTL).

The protein to TraI of plasmid F. In terms of assembly, monomer. Part of the relaxosome, a complex composed of plasmid-encodes TraI, TraM, TraY and host-encoded IHF bound to the F plasmid origin of transfer (oriT). Directly contacts coupling protein TraD. Seems to directly contact TraM via its C-terminus. Requires Mg(2+) as cofactor.

The protein localises to the cytoplasm. The catalysed reaction is ATP-independent breakage of single-stranded DNA, followed by passage and rejoining.. The enzyme catalyses ATP + H2O = ADP + phosphate + H(+). In terms of biological role, conjugative DNA transfer (CDT) is the unidirectional transfer of ssDNA plasmid from a donor to a recipient cell. It is the central mechanism by which antibiotic resistance and virulence factors are propagated in bacterial populations. Part of the relaxosome, which facilitates a site- and strand-specific cut in the origin of transfer by TraI, at the nic site. Relaxosome formation requires binding of IHF and TraY to the oriT region, which then facilitates binding of TraI relaxase. TraI forms a covalent 5'-phosphotyrosine intermediate linkage to the ssDNA. The transesterified T-strand moves from the donor cell to the recipient cell in a 5'to 3' direction, with the DNA helicase activity of TraI unwinding the DNA. DNA transfer occurs via the conjugative pore (transferosome) an intercellular junction mediated by a type IV secretion system, with TraD providing the means to link the relaxosome to the conjugative pore. The relaxase completes DNA transfer by reversing the covalent phosphotyrosine linkage and releasing the T-strand. Its function is as follows. TraI has also been identified as DNA helicase I. DNA. helicase I is a potent, highly processive DNA-dependent ATPase, able to unwind about 1.1 kb dsDNA per second in a 5' to 3' manner. This is Multifunctional conjugation protein TraI (traI) from Escherichia coli.